The sequence spans 253 residues: Hydroxyacylglutathione hydrolase (253 aa).

Residues His54, His56, Asp58, His59, His112, Asp131, and His169 each contribute to the Zn(2+) site.

Belongs to the metallo-beta-lactamase superfamily. Glyoxalase II family. As to quaternary structure, monomer. Zn(2+) serves as cofactor.

It carries out the reaction an S-(2-hydroxyacyl)glutathione + H2O = a 2-hydroxy carboxylate + glutathione + H(+). Its pathway is secondary metabolite metabolism; methylglyoxal degradation; (R)-lactate from methylglyoxal: step 2/2. Its function is as follows. Thiolesterase that catalyzes the hydrolysis of S-D-lactoyl-glutathione to form glutathione and D-lactic acid. The sequence is that of Hydroxyacylglutathione hydrolase from Bartonella henselae (strain ATCC 49882 / DSM 28221 / CCUG 30454 / Houston 1) (Rochalimaea henselae).